Reading from the N-terminus, the 425-residue chain is Septin-7 (425 aa).

Residues 28–297 (RGFEFTLMVV…ENYRSRKLAA (270 aa)) form the Septin-type G domain. The tract at residues 38–45 (GESGLGKS) is G1 motif. GTP-binding positions include 38 to 45 (GESGLGKS), T71, G97, 176 to 184 (KADTLTPEE), G231, and R246. The segment at 94 to 97 (DTPG) is G3 motif. Residues 175–178 (AKAD) are G4 motif. A coiled-coil region spans residues 324–421 (LAQMEEERRE…SRTLEKNKKK (98 aa)).

It belongs to the TRAFAC class TrmE-Era-EngA-EngB-Septin-like GTPase superfamily. Septin GTPase family. As to quaternary structure, monomer, and homodimer. Nucleotide binding promotes oligomerization. Can form heterooligomers with other family members and form filaments.

It localises to the cytoplasm. Its subcellular location is the chromosome. The protein resides in the centromere. The protein localises to the kinetochore. It is found in the cytoskeleton. It localises to the spindle. Its subcellular location is the cleavage furrow. The protein resides in the midbody. The protein localises to the cilium axoneme. Functionally, filament-forming cytoskeletal GTPase. Required for normal organization of the actin cytoskeleton. Required for normal progress through mitosis. Involved in cytokinesis. Plays a role in ciliogenesis and collective cell movements including convergent extension during gastrulation. Controls cell elongation but not polarization during convergent extension. The polypeptide is Septin-7 (Xenopus laevis (African clawed frog)).